Consider the following 176-residue polypeptide: Cytochrome b (176 aa).

3 helical membrane-spanning segments follow: residues 33 to 53, 77 to 98, and 113 to 133; these read FGSL…FLAM, WVLR…YLHV, and WNVG…GYVL. H83 and H97 together coordinate heme b.

Belongs to the cytochrome b family. As to quaternary structure, the cytochrome bc1 complex contains 11 subunits: 3 respiratory subunits (MT-CYB, CYC1 and UQCRFS1), 2 core proteins (UQCRC1 and UQCRC2) and 6 low-molecular weight proteins (UQCRH/QCR6, UQCRB/QCR7, UQCRQ/QCR8, UQCR10/QCR9, UQCR11/QCR10 and a cleavage product of UQCRFS1). This cytochrome bc1 complex then forms a dimer. Heme b is required as a cofactor.

It is found in the mitochondrion inner membrane. In terms of biological role, component of the ubiquinol-cytochrome c reductase complex (complex III or cytochrome b-c1 complex) that is part of the mitochondrial respiratory chain. The b-c1 complex mediates electron transfer from ubiquinol to cytochrome c. Contributes to the generation of a proton gradient across the mitochondrial membrane that is then used for ATP synthesis. The sequence is that of Cytochrome b (MT-CYB) from Corynorhinus rafinesquii (Rafinesque's big-eared bat).